The following is a 270-amino-acid chain: 3-methyl-2-oxobutanoate hydroxymethyltransferase (270 aa).

Residues D50 and D89 each contribute to the Mg(2+) site. 3-methyl-2-oxobutanoate is bound by residues D50–S51, D89, and K118. E120 provides a ligand contact to Mg(2+). The Proton acceptor role is filled by E187.

The protein belongs to the PanB family. Homodecamer; pentamer of dimers. Requires Mg(2+) as cofactor.

The protein localises to the cytoplasm. The enzyme catalyses 3-methyl-2-oxobutanoate + (6R)-5,10-methylene-5,6,7,8-tetrahydrofolate + H2O = 2-dehydropantoate + (6S)-5,6,7,8-tetrahydrofolate. It functions in the pathway cofactor biosynthesis; (R)-pantothenate biosynthesis; (R)-pantoate from 3-methyl-2-oxobutanoate: step 1/2. Its function is as follows. Catalyzes the reversible reaction in which hydroxymethyl group from 5,10-methylenetetrahydrofolate is transferred onto alpha-ketoisovalerate to form ketopantoate. This Helicobacter acinonychis (strain Sheeba) protein is 3-methyl-2-oxobutanoate hydroxymethyltransferase.